A 183-amino-acid chain; its full sequence is Transmembrane protein 52B (183 aa).

A signal peptide spans 1–24 (MGVRVHVVAASALLYFILLSGTRC). The helical transmembrane segment at 40–60 (VHLWYIWLLVVIGALLLLCGL) threads the bilayer. The segment at 158–183 (DLPPVPEEKQLPPTEKESTRIVDSWN) is disordered. Positions 163–177 (PEEKQLPPTEKESTR) are enriched in basic and acidic residues.

It localises to the membrane. The sequence is that of Transmembrane protein 52B (TMEM52B) from Homo sapiens (Human).